We begin with the raw amino-acid sequence, 265 residues long: Asparagine-rich protein (265 aa).

An N-terminal signal peptide occupies residues 1-21; the sequence is MSRLTLLVLLVIAAVIQKVHG. 2 disordered regions span residues 20–71 and 88–183; these read HGQG…NRNI and SNQN…NQQY. Basic and acidic residues-rich tracts occupy residues 22-35 and 44-55; these read QGRENEKKNEHEPG and EKTERNLREPNR. Residues 88–98 are compositionally biased toward low complexity; sequence SNQNNFGNNRS. Residues 115-124 show a composition bias toward basic and acidic residues; that stretch reads NKSEVEKENG. The segment covering 152 to 166 has biased composition (basic residues); sequence KVQHRIAKRFQKRHP.

Nacreous layer of shell (at protein level). Expressed primarily in the mantle with highest level in the mantle pallium and lower level in the mantle edge.

The protein localises to the secreted. The chain is Asparagine-rich protein from Pinctada maxima (Silver-lipped pearl oyster).